The primary structure comprises 226 residues: V-type proton ATPase subunit E (226 aa).

Belongs to the V-ATPase E subunit family. In terms of assembly, V-ATPase is a heteromultimeric enzyme composed of a peripheral catalytic V1 complex (components A to H) attached to an integral membrane V0 proton pore complex (components: a, c, c', c'', d, e, f and VOA1).

Its subcellular location is the vacuole membrane. Functionally, subunit of the V1 complex of vacuolar(H+)-ATPase (V-ATPase), a multisubunit enzyme composed of a peripheral complex (V1) that hydrolyzes ATP and a membrane integral complex (V0) that translocates protons. V-ATPase is responsible for acidifying and maintaining the pH of intracellular compartments. The protein is V-type proton ATPase subunit E (VMA4) of Candida albicans (Yeast).